Here is a 130-residue protein sequence, read N- to C-terminus: Small ribosomal subunit protein uS11 (130 aa).

This sequence belongs to the universal ribosomal protein uS11 family. Part of the 30S ribosomal subunit. Interacts with proteins S7 and S18. Binds to IF-3.

Its function is as follows. Located on the platform of the 30S subunit, it bridges several disparate RNA helices of the 16S rRNA. Forms part of the Shine-Dalgarno cleft in the 70S ribosome. The sequence is that of Small ribosomal subunit protein uS11 from Caldicellulosiruptor bescii (strain ATCC BAA-1888 / DSM 6725 / KCTC 15123 / Z-1320) (Anaerocellum thermophilum).